The sequence spans 1273 residues: DNA-directed RNA polymerase subunit beta (1273 aa).

The protein belongs to the RNA polymerase beta chain family. In terms of assembly, the RNAP catalytic core consists of 2 alpha, 1 beta, 1 beta' and 1 omega subunit. When a sigma factor is associated with the core the holoenzyme is formed, which can initiate transcription.

The catalysed reaction is RNA(n) + a ribonucleoside 5'-triphosphate = RNA(n+1) + diphosphate. In terms of biological role, DNA-dependent RNA polymerase catalyzes the transcription of DNA into RNA using the four ribonucleoside triphosphates as substrates. In Onion yellows phytoplasma (strain OY-M), this protein is DNA-directed RNA polymerase subunit beta.